We begin with the raw amino-acid sequence, 477 residues long: UDP-N-acetylmuramate--L-alanine ligase (477 aa).

ATP is bound at residue G120–T126.

This sequence belongs to the MurCDEF family.

Its subcellular location is the cytoplasm. The enzyme catalyses UDP-N-acetyl-alpha-D-muramate + L-alanine + ATP = UDP-N-acetyl-alpha-D-muramoyl-L-alanine + ADP + phosphate + H(+). Its pathway is cell wall biogenesis; peptidoglycan biosynthesis. Its function is as follows. Cell wall formation. This is UDP-N-acetylmuramate--L-alanine ligase from Rickettsia canadensis (strain McKiel).